Reading from the N-terminus, the 500-residue chain is MAKKDKTSVKKSVKETASKKGAIEKPSKSKKITKEAAKEIAKQSSKTDVSPKKSKKEAKRASSPEPSKKSVKKQKKSKKKEESSSESESESSSSESESSSSESESSSSESESSSSESSSSESEEEVIVKTEEKKESSSESSSSSESEEEEEAVVKIEEKKESSSDSSSESSSSESESESSSSESEEEEEVVEKTEEKKEGSSESSSDSESSSDSSSESGDSDSSSDSESESSSEDEKKRKAEPASEERPAKITKPSQDSNETCTVFVGRLSWNVDDQWLGQEFEEYGTIVGARVIMDGQSGRSKGYGYVDFETPEAAKAAVAANGTKEIDGRMVNLDLSNPRPANPQPYAQQRAGNFGDQLSEPSDTVFVGNLSFNATEDDLSTAFGGCGDIQSIRLPTDPQSGRLKGFGYVTFSDIDSAKKCVEMNGHFIAGRPCRLDFSTPRTGGGSRGGRGGFGGRGGFGGRGGFGGGRGRGRGGARSGNPNRGSVAPFSGNKVTFD.

Basic and acidic residues-rich tracts occupy residues 1-41 (MAKK…KEIA) and 59-68 (KRASSPEPSK). Residues 1–262 (MAKKDKTSVK…TKPSQDSNET (262 aa)) form a disordered region. Residues 69–78 (KSVKKQKKSK) are compositionally biased toward basic residues. Residues 90–120 (ESSSSESESSSSESESSSSESESSSSESSSS) show a composition bias toward low complexity. The segment covering 126–137 (VIVKTEEKKESS) has biased composition (basic and acidic residues). A phosphoserine mark is found at serine 143, serine 144, and serine 146. Positions 152 to 163 (AVVKIEEKKESS) are enriched in basic and acidic residues. Low complexity predominate over residues 164–182 (SDSSSESSSSESESESSSS). The span at 191 to 201 (VEKTEEKKEGS) shows a compositional bias: basic and acidic residues. Positions 202 to 218 (SESSSDSESSSDSSSES) are enriched in low complexity. Acidic residues predominate over residues 219 to 233 (GDSDSSSDSESESSS). The segment covering 234-250 (EDEKKRKAEPASEERPA) has biased composition (basic and acidic residues). 2 consecutive RRM domains span residues 263-341 (CTVF…LSNP) and 366-443 (DTVF…FSTP). The tract at residues 441-500 (STPRTGGGSRGGRGGFGGRGGFGGRGGFGGGRGRGRGGARSGNPNRGSVAPFSGNKVTFD) is disordered. Residues 445–480 (TGGGSRGGRGGFGGRGGFGGRGGFGGGRGRGRGGAR) show a composition bias toward gly residues.

It belongs to the RRM GAR family.

The protein resides in the nucleus. It is found in the nucleolus. Its function is as follows. Helps the assembly of pre-ribosomal particles containing 18S rRNA. In Schizosaccharomyces pombe (strain 972 / ATCC 24843) (Fission yeast), this protein is Protein gar2 (gar2).